Consider the following 194-residue polypeptide: Probable WRKY transcription factor 51 (194 aa).

A disordered region spans residues 58–97 (SSETFTGESGGSGSATTLSKKESTNRGSKESDQTKETGHR). Over residues 76-96 (SKKESTNRGSKESDQTKETGH) the composition is skewed to basic and acidic residues. The segment at residues 104–169 (SKIDVMDDGF…YEGVHNHESL (66 aa)) is a DNA-binding region (WRKY).

It belongs to the WRKY group II-c family. In terms of assembly, interacts with CAMBP25/VQ15.

It localises to the nucleus. Transcription factor. Interacts specifically with the W box (5'-(T)TGAC[CT]-3'), a frequently occurring elicitor-responsive cis-acting element. Involved in defense responses. May act as positive regulator of salicylic acid (SA)-mediated signaling and negative regulator of jasmonic acid (JA)-mediated signaling. This Arabidopsis thaliana (Mouse-ear cress) protein is Probable WRKY transcription factor 51 (WRKY51).